The sequence spans 275 residues: Penicillin-insensitive murein endopeptidase (275 aa).

A signal peptide spans 1-19 (MKKWIAGLLALIAISPVMA). 3 disulfides stabilise this stretch: C44–C264, C187–C235, and C216–C223. Residues H110, H113, D120, D147, and H211 each coordinate Zn(2+). The segment at 234–262 (GCGAELESWFQPHQPSAKPGKTLPPPLPP) is disordered.

This sequence belongs to the peptidase M74 family. Dimer. The cofactor is Zn(2+).

The protein localises to the periplasm. Functionally, murein endopeptidase that cleaves the D-alanyl-meso-2,6-diamino-pimelyl amide bond that connects peptidoglycan strands. Likely plays a role in the removal of murein from the sacculus. This Yersinia enterocolitica serotype O:8 / biotype 1B (strain NCTC 13174 / 8081) protein is Penicillin-insensitive murein endopeptidase.